Here is a 701-residue protein sequence, read N- to C-terminus: Transcriptional regulator Kaiso (701 aa).

Positions 32-94 (CDVTVIVEDR…IYSSKIVRVR (63 aa)) constitute a BTB domain. Disordered stretches follow at residues 128-158 (GAGG…SPLP) and 181-311 (SSDD…QNQH). Over residues 245-258 (TPSSQVQLTQNSLP) the composition is skewed to polar residues. Over residues 259–273 (TNQQSSKNTSSTTQK) the composition is skewed to low complexity. Positions 278-311 (VNANISKNPTPAANGFLSPTAQKQGTPNAVQNQH) are enriched in polar residues. A required for methylation dependent DNA-binding region spans residues 470-609 (AKLDLDGLPN…QIRQYAYVNN (140 aa)). 3 C2H2-type zinc fingers span residues 501–523 (YICI…FNVH), 529–551 (YPCR…EIHH), and 557–580 (YQCL…RSVH). The segment at 519–701 (HFNVHSWEKK…EFEFVIPESY (183 aa)) is required for sequence specific DNA-binding. A disordered region spans residues 644–664 (DIDPDEPQQPASEGNHANSAT). The span at 652 to 664 (QPASEGNHANSAT) shows a compositional bias: polar residues.

In terms of assembly, self associates. Interacts with tcf7l1-A, leading to repression of tcf7l1-A target genes. Interacts with ctnnd1, and this interaction may inhibit DNA-binding. Interacts with ncor1.

It is found in the nucleus. In terms of biological role, transcriptional regulator with bimodal DNA-binding specificity. Binds to methylated CpG dinucleotides in the consensus sequence 5'-CGCG-3' and also binds to the non-methylated consensus sequence 5'-CTGCNA-3'. May recruit the N-CoR repressor complex to promote histone deacetylation and the formation of repressive chromatin structures in target gene promoters. Contributes to the repression of target genes of the Wnt signaling pathway and to the methylation-dependent repression of zygotic transcription prior to the mid-blastula transition (MBT). Also required for gastrulation movements. The chain is Transcriptional regulator Kaiso (zbtb33) from Xenopus laevis (African clawed frog).